Here is a 385-residue protein sequence, read N- to C-terminus: 1-deoxy-D-xylulose 5-phosphate reductoisomerase (385 aa).

Threonine 11, glycine 12, serine 13, isoleucine 14, glutamine 39, and asparagine 117 together coordinate NADPH. Lysine 118 provides a ligand contact to 1-deoxy-D-xylulose 5-phosphate. Glutamate 119 contributes to the NADPH binding site. Aspartate 143 is a Mn(2+) binding site. 1-deoxy-D-xylulose 5-phosphate-binding residues include serine 144, glutamate 145, serine 170, and histidine 193. Glutamate 145 provides a ligand contact to Mn(2+). Glycine 199 contacts NADPH. Positions 206, 211, 212, and 215 each coordinate 1-deoxy-D-xylulose 5-phosphate. Position 215 (glutamate 215) interacts with Mn(2+).

This sequence belongs to the DXR family. It depends on Mg(2+) as a cofactor. Mn(2+) is required as a cofactor.

The enzyme catalyses 2-C-methyl-D-erythritol 4-phosphate + NADP(+) = 1-deoxy-D-xylulose 5-phosphate + NADPH + H(+). It functions in the pathway isoprenoid biosynthesis; isopentenyl diphosphate biosynthesis via DXP pathway; isopentenyl diphosphate from 1-deoxy-D-xylulose 5-phosphate: step 1/6. Its function is as follows. Catalyzes the NADPH-dependent rearrangement and reduction of 1-deoxy-D-xylulose-5-phosphate (DXP) to 2-C-methyl-D-erythritol 4-phosphate (MEP). The protein is 1-deoxy-D-xylulose 5-phosphate reductoisomerase of Thermomicrobium roseum (strain ATCC 27502 / DSM 5159 / P-2).